The sequence spans 398 residues: Nuclear egress protein 2 (398 aa).

The Perinuclear space segment spans residues 1–359 (MEMNKVLHQD…GPSRPQSGPW (359 aa)). Disordered regions lie at residues 202 to 246 (ALTR…PPPP) and 306 to 334 (LEEH…SLER). Residues 215 to 224 (ASPPPPPPRH) are compositionally biased toward pro residues. Residue S216 is modified to Phosphoserine. Low complexity predominate over residues 225 to 240 (PSCSPTMVAAGGAAAG). Residues 311 to 323 (SRRRGVSTHHRHP) show a composition bias toward basic residues. The chain crosses the membrane as a helical span at residues 360–382 (LPARFATLGPLVLALLLVLALLW). Over 383-398 (RGHGQSSSPTRSAHRD) the chain is Nuclear.

The protein belongs to the herpesviridae NEC2 protein family. As to quaternary structure, forms a heterohexameric complex with NEC1. Interacts with host UBA7 and RNF170; this interaction promotes UBA7 proteasomal degradation. Phosphorylated. Phosphorylation by viral kinase UL97 at Ser-216 plays an important role for correct viral nuclear egress complex (NEC) localization.

Its subcellular location is the host nucleus inner membrane. Its function is as follows. Plays an essential role in virion nuclear egress, the first step of virion release from infected cell. Within the host nucleus, NEC1 interacts with the newly formed capsid through the vertexes and directs it to the inner nuclear membrane by associating with NEC2. Induces the budding of the capsid at the inner nuclear membrane as well as its envelopment into the perinuclear space. There, the NEC1/NEC2 complex promotes the fusion of the enveloped capsid with the outer nuclear membrane and the subsequent release of the viral capsid into the cytoplasm where it will reach the secondary budding sites in the host Golgi or trans-Golgi network. Inhibits host ISGylation and subsequent innate antiviral response by targeting host UBA7 for proteasomal degradation. The sequence is that of Nuclear egress protein 2 from Homo sapiens (Human).